The following is a 1252-amino-acid chain: Calmodulin-regulated spectrin-associated protein 3 (1252 aa).

9 disordered regions span residues K183–Q205, H331–H385, S429–D457, G479–L604, F638–Y697, Q712–R935, T962–T981, D996–A1030, and P1063–R1114. T184 carries the post-translational modification Phosphothreonine. S193 carries the phosphoserine modification. The Calponin-homology (CH) domain maps to P203–M312. 6 positions are modified to phosphoserine: S334, S347, S351, S368, S373, and S382. The span at P335–V353 shows a compositional bias: polar residues. Residues P359–S373 show a composition bias toward low complexity. Composition is skewed to polar residues over residues T374 to M383, V441 to Q450, and E525 to S534. Phosphoserine is present on residues S548, S555, and S561. Basic and acidic residues predominate over residues A569–A580. Positions E595 to H629 form a coiled coil. S683 bears the Phosphoserine mark. Residues D696 to A727 are a coiled coil. Residues P729 to A739 show a composition bias toward pro residues. Positions A740–P768 are enriched in low complexity. Phosphoserine is present on S767. The residue at position 797 (T797) is a Phosphothreonine. Residues S812 and S881 each carry the phosphoserine modification. Positions S812 to L825 are enriched in polar residues. Residues Y887–A934 are compositionally biased toward basic and acidic residues. Residues E896 to L943 adopt a coiled-coil conformation. S1077 bears the Phosphoserine mark. The CKK domain occupies G1112 to K1246.

The protein belongs to the CAMSAP1 family. Interacts with PLEKHA7. Interacts with CAMSAP2. Interacts with KATNA1 and KATNB1; leading to regulate the length of CAMSAP3-decorated microtubule stretches. Interacts with AKAP9; regulating Golgi assembly in epithelial cells. Interacts with MACF1. Interacts with isoform C of CDH23; leading to inhibit CAMSAP3 ability to induce microtubule bundle formation. Interacts with AKNA. In terms of tissue distribution, expressed at the apical surface of respiratory epithelia, as well as in the acini of submucosal glands (at protein level). In cochlea, restricted to the organ of Corti and increases during development (at protein level). Highly expressed in both sensory hair cells and supporting cells.

It is found in the cytoplasm. The protein resides in the cytoskeleton. The protein localises to the cell junction. Its subcellular location is the adherens junction. It localises to the cilium axoneme. It is found in the cilium basal body. Functionally, key microtubule-organizing protein that specifically binds the minus-end of non-centrosomal microtubules and regulates their dynamics and organization. Specifically recognizes growing microtubule minus-ends and autonomously decorates and stabilizes microtubule lattice formed by microtubule minus-end polymerization. Acts on free microtubule minus-ends that are not capped by microtubule-nucleating proteins or other factors and protects microtubule minus-ends from depolymerization. In addition, it also reduces the velocity of microtubule polymerization. Required for the biogenesis and the maintenance of zonula adherens by anchoring the minus-end of microtubules to zonula adherens and by recruiting the kinesin KIFC3 to those junctional sites. Required for orienting the apical-to-basal polarity of microtubules in epithelial cells: acts by tethering non-centrosomal microtubules to the apical cortex, leading to their longitudinal orientation. Plays a key role in early embryos, which lack centrosomes: accumulates at the microtubule bridges that connect pairs of cells and enables the formation of a non-centrosomal microtubule-organizing center that directs intracellular transport in the early embryo. Couples non-centrosomal microtubules with actin: interaction with MACF1 at the minus ends of non-centrosomal microtubules, tethers the microtubules to actin filaments, regulating focal adhesion size and cell migration. Plays a key role in the generation of non-centrosomal microtubules by accumulating in the pericentrosomal region and cooperating with KATNA1 to release non-centrosomal microtubules from the centrosome. Through the microtubule cytoskeleton, also regulates the organization of cellular organelles including the Golgi and the early endosomes. Through interaction with AKAP9, involved in translocation of Golgi vesicles in epithelial cells, where microtubules are mainly non-centrosomal. Plays an important role in motile cilia function by facilitatating proper orientation of basal bodies and formation of central microtubule pairs in motile cilia. This is Calmodulin-regulated spectrin-associated protein 3 from Mus musculus (Mouse).